A 431-amino-acid polypeptide reads, in one-letter code: Glutamate-1-semialdehyde 2,1-aminomutase (431 aa).

At Lys270 the chain carries N6-(pyridoxal phosphate)lysine.

This sequence belongs to the class-III pyridoxal-phosphate-dependent aminotransferase family. HemL subfamily. In terms of assembly, homodimer. It depends on pyridoxal 5'-phosphate as a cofactor.

The protein localises to the cytoplasm. The catalysed reaction is (S)-4-amino-5-oxopentanoate = 5-aminolevulinate. It participates in porphyrin-containing compound metabolism; protoporphyrin-IX biosynthesis; 5-aminolevulinate from L-glutamyl-tRNA(Glu): step 2/2. This is Glutamate-1-semialdehyde 2,1-aminomutase from Limosilactobacillus reuteri subsp. reuteri (strain JCM 1112) (Lactobacillus reuteri).